The primary structure comprises 101 residues: UPF0473 protein spr0177 (101 aa).

Belongs to the UPF0473 family.

The polypeptide is UPF0473 protein spr0177 (Streptococcus pneumoniae (strain ATCC BAA-255 / R6)).